A 569-amino-acid chain; its full sequence is Membrane protein insertase YidC (569 aa).

Residues 6-26 (FVLFLIFATSLLFLWDAWQKE) traverse the membrane as a helical segment. Composition is skewed to polar residues over residues 32–52 (QGPK…TAGT) and 62–74 (LASS…STAE). The tract at residues 32-81 (QGPKTAVQGTETQANTGTAGTAETPVPGDQLASSVPQRGSTAENGAPVRA) is disordered. The next 5 helical transmembrane spans lie at 348–368 (VVDY…LSLF), 375–395 (WGVA…PLSA), 442–462 (GGCL…WVLL), 479–499 (LSAP…MFLQ), and 519–539 (PLAF…YSLV).

Belongs to the OXA1/ALB3/YidC family. Type 1 subfamily. Interacts with the Sec translocase complex via SecD. Specifically interacts with transmembrane segments of nascent integral membrane proteins during membrane integration.

The protein localises to the cell inner membrane. Its function is as follows. Required for the insertion and/or proper folding and/or complex formation of integral membrane proteins into the membrane. Involved in integration of membrane proteins that insert both dependently and independently of the Sec translocase complex, as well as at least some lipoproteins. Aids folding of multispanning membrane proteins. The protein is Membrane protein insertase YidC of Nitrosospira multiformis (strain ATCC 25196 / NCIMB 11849 / C 71).